The sequence spans 499 residues: UPF0159 protein Ta1429 (499 aa).

2 consecutive ThyX domains span residues 1–246 (MIDR…ALSQ) and 271–476 (EKVR…IKFV).

This sequence belongs to the UPF0159 family.

This chain is UPF0159 protein Ta1429, found in Thermoplasma acidophilum (strain ATCC 25905 / DSM 1728 / JCM 9062 / NBRC 15155 / AMRC-C165).